The sequence spans 264 residues: Proteasome subunit beta type-4 (264 aa).

Residue Met1 is modified to N-acetylmethionine. The propeptide occupies 1–45 (MEAFWESRAGHWAGGPAPGQFYRIPATPSGLMDPASAPCEGPITR). Tyr102 is subject to Phosphotyrosine.

Belongs to the peptidase T1B family. In terms of assembly, the 26S proteasome consists of a 20S proteasome core and two 19S regulatory subunits. The 20S proteasome core is a barrel-shaped complex made of 28 subunits that are arranged in four stacked rings. The two outer rings are each formed by seven alpha subunits, and the two inner rings are formed by seven beta subunits. The proteolytic activity is exerted by three beta-subunits PSMB5, PSMB6 and PSMB7. Forms a ternary complex with SMAD1 and OAZ1 before PSMB4 is incorporated into the 20S proteasome. Interacts with PRPF19. As to expression, detected in liver (at protein level).

It is found in the cytoplasm. The protein localises to the nucleus. Non-catalytic component of the 20S core proteasome complex involved in the proteolytic degradation of most intracellular proteins. This complex plays numerous essential roles within the cell by associating with different regulatory particles. Associated with two 19S regulatory particles, forms the 26S proteasome and thus participates in the ATP-dependent degradation of ubiquitinated proteins. The 26S proteasome plays a key role in the maintenance of protein homeostasis by removing misfolded or damaged proteins that could impair cellular functions, and by removing proteins whose functions are no longer required. Associated with the PA200 or PA28, the 20S proteasome mediates ubiquitin-independent protein degradation. This type of proteolysis is required in several pathways including spermatogenesis (20S-PA200 complex) or generation of a subset of MHC class I-presented antigenic peptides (20S-PA28 complex). SMAD1/OAZ1/PSMB4 complex mediates the degradation of the CREBBP/EP300 repressor SNIP1. The polypeptide is Proteasome subunit beta type-4 (Psmb4) (Mus musculus (Mouse)).